The primary structure comprises 1010 residues: Lethal(2) giant larvae protein homolog SRO77 (1010 aa).

14 WD repeats span residues 47–80 (TVTTFDYTQSLLAVATTAGEIHVYGQKQIEVVFT), 87–122 (IKHMRFIKGIYLIAVDEKSNIIVLSVHSKQILTTVF), 127–163 (ITCIETDPSLDWMLIGLESGSILIYDVDRNQMSKLKI), 182–215 (SIQWNPRDIGTILISYEHITVIYSFIDYKVKQHF), 240–275 (VIQSLYHPNSLHILTVHEDNSLVFWDVNSGKLIHAR), 299–364 (AIFK…QKLF), 372–407 (LINFLPLPKASPYFGGCHDTNLILLLLEDGELETLI), 431–504 (VTTC…FEVN), 518–595 (KNIS…STVI), 602–637 (VSAIMNSNIGFVAVGFIEGTLIILDRRGPAIIFNEN), 649–700 (VSTV…DATK), 709–763 (GINS…THAL), 768–815 (IATS…KNLR), and 829–852 (SILENGDIVIRTGKFQASLISVLN). The segment at 932-958 (SNAARKLPPGTEDHRYARPVRSSGRSN) is disordered.

This sequence belongs to the WD repeat L(2)GL family. Interacts with SEC9.

Acts as an allosteric regulator of polarized exocytosis by promoting the targeted fusion of vesicles with the plasma membrane. Involved in maintenance of ion homeostasis in cells exposed to NaCl stress. May be involved in the targeting of the myosin proteins to their intrinsic pathways. Multicopy suppressor of RHO3. May also participate in the maintenance of cell polarity and bud growth. This is Lethal(2) giant larvae protein homolog SRO77 (SRO77) from Saccharomyces cerevisiae (strain ATCC 204508 / S288c) (Baker's yeast).